The sequence spans 215 residues: Probable phosphoglycerate mutase GpmB (215 aa).

Residues 8–15 (RHGETQWN), 21–22 (QG), arginine 58, lysine 60, 82–85 (ELDM), 104–105 (RR), and 151–152 (GI) contribute to the substrate site. Histidine 9 serves as the catalytic Tele-phosphohistidine intermediate. Catalysis depends on glutamate 82, which acts as the Proton donor/acceptor.

This sequence belongs to the phosphoglycerate mutase family. GpmB subfamily.

It catalyses the reaction (2R)-2-phosphoglycerate = (2R)-3-phosphoglycerate. It functions in the pathway carbohydrate degradation; glycolysis; pyruvate from D-glyceraldehyde 3-phosphate: step 3/5. In Salmonella typhi, this protein is Probable phosphoglycerate mutase GpmB.